We begin with the raw amino-acid sequence, 397 residues long: Dual-specificity RNA methyltransferase RlmN (397 aa).

The active-site Proton acceptor is the E116. Residues E122–D366 enclose the Radical SAM core domain. A disulfide bridge connects residues C129 and C371. 3 residues coordinate [4Fe-4S] cluster: C136, C140, and C143. S-adenosyl-L-methionine contacts are provided by residues G195–E196, S227, S249–H251, and N328. C371 (S-methylcysteine intermediate) is an active-site residue.

The protein belongs to the radical SAM superfamily. RlmN family. The cofactor is [4Fe-4S] cluster.

The protein resides in the cytoplasm. The catalysed reaction is adenosine(2503) in 23S rRNA + 2 reduced [2Fe-2S]-[ferredoxin] + 2 S-adenosyl-L-methionine = 2-methyladenosine(2503) in 23S rRNA + 5'-deoxyadenosine + L-methionine + 2 oxidized [2Fe-2S]-[ferredoxin] + S-adenosyl-L-homocysteine. It catalyses the reaction adenosine(37) in tRNA + 2 reduced [2Fe-2S]-[ferredoxin] + 2 S-adenosyl-L-methionine = 2-methyladenosine(37) in tRNA + 5'-deoxyadenosine + L-methionine + 2 oxidized [2Fe-2S]-[ferredoxin] + S-adenosyl-L-homocysteine. Functionally, specifically methylates position 2 of adenine 2503 in 23S rRNA and position 2 of adenine 37 in tRNAs. m2A2503 modification seems to play a crucial role in the proofreading step occurring at the peptidyl transferase center and thus would serve to optimize ribosomal fidelity. This is Dual-specificity RNA methyltransferase RlmN from Ruegeria sp. (strain TM1040) (Silicibacter sp.).